A 98-amino-acid chain; its full sequence is Sarcosine oxidase subunit delta (98 aa).

Zn(2+) is bound by residues C6, C9, H59, and C63.

This sequence belongs to the SoxD family. As to quaternary structure, heterotetramer composed of subunits alpha (SoxA), beta (SoxB), gamma (SoxG) and delta (SoxD).

The protein resides in the cytoplasm. The catalysed reaction is sarcosine + (6S)-5,6,7,8-tetrahydrofolate + O2 = (6R)-5,10-methylene-5,6,7,8-tetrahydrofolate + glycine + H2O2. It catalyses the reaction sarcosine + O2 + H2O = formaldehyde + glycine + H2O2. In the presence of tetrahydrofolate, catalyzes the oxidative demethylation of sarcosine to yield glycine, 5,10-methylenetetrahydrofolate and hydrogen peroxide. In the absence of tetrahydrofolate, catalyzes the oxidative demethylation of sarcosine to yield glycine, formaldehyde and hydrogen peroxide. This chain is Sarcosine oxidase subunit delta, found in Corynebacterium sp. (strain P-1).